Reading from the N-terminus, the 100-residue chain is Urease subunit gamma (100 aa).

This sequence belongs to the urease gamma subunit family. As to quaternary structure, heterotrimer of UreA (gamma), UreB (beta) and UreC (alpha) subunits. Three heterotrimers associate to form the active enzyme.

The protein localises to the cytoplasm. It carries out the reaction urea + 2 H2O + H(+) = hydrogencarbonate + 2 NH4(+). The protein operates within nitrogen metabolism; urea degradation; CO(2) and NH(3) from urea (urease route): step 1/1. In Prochlorococcus marinus (strain MIT 9312), this protein is Urease subunit gamma.